The following is a 323-amino-acid chain: MEKNDKEKRELTIEDLPGVGDATAEKLRESGYDDIMTIAVASPKDLAEISGIAEGAAIKIINAARKYADVGNFETGEEILNKRKEIKKLTTGSSNLDNLLGGGLETQSITEFFGEFGSGKTQIMHQLAVNATMPVEKNGFDSDVLIIDTENTFRPERIIQMARAKDLDPDQTLERIHVARAYNSHHQILLAEKAADMAREYKIRLLIVDSLTSHFRSEYVGRGSLAERQQLLNRHMHDLLKFGTIYNAVIAVTNQVSANPAVFFGDPMNPIGGNIVGHTATFRIYLRKAKAGKRIARLIDSPYLPEGETVITITESGITDGEK.

114-121 lines the ATP pocket; the sequence is GEFGSGKT.

Belongs to the eukaryotic RecA-like protein family.

Functionally, involved in DNA repair and in homologous recombination. Binds and assemble on single-stranded DNA to form a nucleoprotein filament. Hydrolyzes ATP in a ssDNA-dependent manner and promotes DNA strand exchange between homologous DNA molecules. In Picrophilus torridus (strain ATCC 700027 / DSM 9790 / JCM 10055 / NBRC 100828 / KAW 2/3), this protein is DNA repair and recombination protein RadA.